The sequence spans 182 residues: ADP-ribosylation factor-like protein 11 (182 aa).

Gly-2 carries N-myristoyl glycine lipidation. Residues Gly-19–Thr-26, Asp-63–Gln-67, and Asn-122–Glu-125 contribute to the GTP site.

The protein belongs to the small GTPase superfamily. Arf family.

Functionally, may play a role in apoptosis. May act as a tumor suppressor. The chain is ADP-ribosylation factor-like protein 11 (ARL11) from Bos taurus (Bovine).